Here is a 589-residue protein sequence, read N- to C-terminus: Probable translation initiation factor IF-2 (589 aa).

The 222-residue stretch at 4–225 (VRSPFVVVMG…AGVSQRFIPR (222 aa)) folds into the tr-type G domain. The segment at 13 to 20 (GHVDVGKT) is G1. 13–20 (GHVDVGKT) provides a ligand contact to GTP. The G2 stretch occupies residues 38–42 (MITQH). Residues 79-82 (DTPG) are G3. GTP is bound by residues 79–83 (DTPGH) and 133–136 (NKLD). The interval 133-136 (NKLD) is G4. The interval 201 to 203 (SAV) is G5.

It belongs to the TRAFAC class translation factor GTPase superfamily. Classic translation factor GTPase family. IF-2 subfamily.

Functionally, function in general translation initiation by promoting the binding of the formylmethionine-tRNA to ribosomes. Seems to function along with eIF-2. In Pyrobaculum aerophilum (strain ATCC 51768 / DSM 7523 / JCM 9630 / CIP 104966 / NBRC 100827 / IM2), this protein is Probable translation initiation factor IF-2.